The chain runs to 281 residues: Acyl-[acyl-carrier-protein]--UDP-N-acetylglucosamine O-acyltransferase (281 aa).

It belongs to the transferase hexapeptide repeat family. LpxA subfamily. Homotrimer.

The protein resides in the cytoplasm. The catalysed reaction is a (3R)-hydroxyacyl-[ACP] + UDP-N-acetyl-alpha-D-glucosamine = a UDP-3-O-[(3R)-3-hydroxyacyl]-N-acetyl-alpha-D-glucosamine + holo-[ACP]. Its pathway is glycolipid biosynthesis; lipid IV(A) biosynthesis; lipid IV(A) from (3R)-3-hydroxytetradecanoyl-[acyl-carrier-protein] and UDP-N-acetyl-alpha-D-glucosamine: step 1/6. Involved in the biosynthesis of lipid A, a phosphorylated glycolipid that anchors the lipopolysaccharide to the outer membrane of the cell. In Rickettsia bellii (strain OSU 85-389), this protein is Acyl-[acyl-carrier-protein]--UDP-N-acetylglucosamine O-acyltransferase.